A 388-amino-acid chain; its full sequence is Formate-dependent phosphoribosylglycinamide formyltransferase (388 aa).

Residues 20–21 (EL) and Glu-80 contribute to the N(1)-(5-phospho-beta-D-ribosyl)glycinamide site. ATP is bound by residues Arg-112, Lys-153, 158 to 163 (SSGKGQ), 193 to 196 (EEFI), and Glu-201. One can recognise an ATP-grasp domain in the interval 117–306 (RLAFEKLGLR…EFEIHARAIL (190 aa)). Glu-265 and Glu-277 together coordinate Mg(2+). Residues Asp-284, Lys-352, and 359 to 360 (RR) contribute to the N(1)-(5-phospho-beta-D-ribosyl)glycinamide site.

The protein belongs to the PurK/PurT family. In terms of assembly, homodimer.

It catalyses the reaction N(1)-(5-phospho-beta-D-ribosyl)glycinamide + formate + ATP = N(2)-formyl-N(1)-(5-phospho-beta-D-ribosyl)glycinamide + ADP + phosphate + H(+). Its pathway is purine metabolism; IMP biosynthesis via de novo pathway; N(2)-formyl-N(1)-(5-phospho-D-ribosyl)glycinamide from N(1)-(5-phospho-D-ribosyl)glycinamide (formate route): step 1/1. Involved in the de novo purine biosynthesis. Catalyzes the transfer of formate to 5-phospho-ribosyl-glycinamide (GAR), producing 5-phospho-ribosyl-N-formylglycinamide (FGAR). Formate is provided by PurU via hydrolysis of 10-formyl-tetrahydrofolate. This chain is Formate-dependent phosphoribosylglycinamide formyltransferase, found in Methanococcus maripaludis (strain C7 / ATCC BAA-1331).